The following is a 270-amino-acid chain: Interleukin-1 alpha (270 aa).

Residues 1 to 114 (MAKVPDLFED…HDLEETIQPR (114 aa)) constitute a propeptide that is removed on maturation. An N-linked (GlcNAc...) asparagine glycan is attached at N64. Position 85 is an N6-acetyllysine (K85). The tract at residues 85 to 89 (KKRRL) is nuclear localization signal (NLS). A Phosphoserine modification is found at S90. N139 and N143 each carry an N-linked (GlcNAc...) asparagine glycan.

This sequence belongs to the IL-1 family. Monomer. Interacts with TMED10; the interaction mediates the translocation from the cytoplasm into the ERGIC (endoplasmic reticulum-Golgi intermediate compartment) and thereby secretion. Interacts with IL1R1. Interacts with S100A13; this interaction is the first step in the export of IL1A, followed by direct translocation of this complex across the plasma membrane. Post-translationally, acetylated within its nuclear localization sequence, which impacts subcellular localization. Proteolytic processed by CAPN1 in a calcium-dependent manner. Cleavage from 31 kDa precursor to 18 kDa biologically active molecules. In terms of processing, phosphorylated. Phosphorylation greatly enhances susceptibility to digestion and promotes the conversion of pre-IL1A alpha to the biologically active IL1A.

The protein resides in the nucleus. Its subcellular location is the cytoplasm. The protein localises to the secreted. Cytokine constitutively present intracellularly in nearly all resting non-hematopoietic cells that plays an important role in inflammation and bridges the innate and adaptive immune systems. After binding to its receptor IL1R1 together with its accessory protein IL1RAP, forms the high affinity interleukin-1 receptor complex. Signaling involves the recruitment of adapter molecules such as MYD88, IRAK1 or IRAK4. In turn, mediates the activation of NF-kappa-B and the three MAPK pathways p38, p42/p44 and JNK pathways. Within the cell, acts as an alarmin and cell death results in its liberation in the extracellular space after disruption of the cell membrane to induce inflammation and alert the host to injury or damage. In addition to its role as a danger signal, which occurs when the cytokine is passively released by cell necrosis, directly senses DNA damage and acts as a signal for genotoxic stress without loss of cell integrity. This Mus musculus (Mouse) protein is Interleukin-1 alpha.